The following is a 140-amino-acid chain: Protein archease (140 aa).

Ca(2+) is bound by residues Asp12, Asp139, and Leu140.

This sequence belongs to the archease family.

Its function is as follows. Activates the tRNA-splicing ligase complex by facilitating the enzymatic turnover of catalytic subunit RtcB. Acts by promoting the guanylylation of RtcB, a key intermediate step in tRNA ligation. Can also alter the NTP specificity of RtcB such that ATP, dGTP or ITP is used efficiently. May also act as a chaperone or modulator of proteins involved in DNA or RNA processing. This chain is Protein archease, found in Methanothermobacter thermautotrophicus (strain ATCC 29096 / DSM 1053 / JCM 10044 / NBRC 100330 / Delta H) (Methanobacterium thermoautotrophicum).